A 332-amino-acid chain; its full sequence is Acetyl-coenzyme A carboxylase carboxyl transferase subunit beta (332 aa).

In terms of domain architecture, CoA carboxyltransferase N-terminal spans 24 to 293 (LWIKCPDSGH…PEVIVESEPE (270 aa)). The interval 288–332 (VESEPEPEPEPVVAEIIPPTSDLPVSAPAPAPVAAQTPAPAAPSA) is disordered. The segment covering 298-332 (PVVAEIIPPTSDLPVSAPAPAPVAAQTPAPAAPSA) has biased composition (low complexity).

It belongs to the AccD/PCCB family. In terms of assembly, acetyl-CoA carboxylase is a heterohexamer composed of biotin carboxyl carrier protein (AccB), biotin carboxylase (AccC) and two subunits each of ACCase subunit alpha (AccA) and ACCase subunit beta (AccD).

It localises to the cytoplasm. The enzyme catalyses N(6)-carboxybiotinyl-L-lysyl-[protein] + acetyl-CoA = N(6)-biotinyl-L-lysyl-[protein] + malonyl-CoA. The protein operates within lipid metabolism; malonyl-CoA biosynthesis; malonyl-CoA from acetyl-CoA: step 1/1. Functionally, component of the acetyl coenzyme A carboxylase (ACC) complex. Biotin carboxylase (BC) catalyzes the carboxylation of biotin on its carrier protein (BCCP) and then the CO(2) group is transferred by the transcarboxylase to acetyl-CoA to form malonyl-CoA. The protein is Acetyl-coenzyme A carboxylase carboxyl transferase subunit beta of Rhodopseudomonas palustris (strain BisB18).